We begin with the raw amino-acid sequence, 119 residues long: DNA-binding protein inhibitor ID-3 (119 aa).

In terms of domain architecture, bHLH spans 28 to 80 (RGKSPSAEEPLSLLDDMNHCYSRLRELVPGVPRGTQLSQVEILQRVIDYILDL).

Homodimer, and heterodimer with other HLH proteins. Interacts with COPS5 and COPS7A. Interacts with IFI204. Interacts with GATA4 and NKX2-5. Interacts with ANKRD2; both proteins cooperate in myoblast differentiation. Interacts with CLOCK and BMAL1. Post-translationally, phosphorylated in vitro by CDC2 and PKC.

It is found in the nucleus. Transcriptional regulator (lacking a basic DNA binding domain) which negatively regulates the basic helix-loop-helix (bHLH) transcription factors by forming heterodimers and inhibiting their DNA binding and transcriptional activity. Implicated in regulating a variety of cellular processes, including cellular growth, senescence, differentiation, apoptosis, angiogenesis, and neoplastic transformation. Involved in myogenesis by inhibiting skeletal muscle and cardiac myocyte differentiation and promoting muscle precursor cells proliferation. Inhibits the binding of E2A-containing protein complexes to muscle creatine kinase E-box enhancer. Regulates the circadian clock by repressing the transcriptional activator activity of the CLOCK-BMAL1 heterodimer. This chain is DNA-binding protein inhibitor ID-3 (Id3), found in Rattus norvegicus (Rat).